The following is a 30-amino-acid chain: NADH-ubiquinone oxidoreductase chain 5 (30 aa).

Residues 7–27 (NIIIIINSSLIIILFSSIFFF) traverse the membrane as a helical segment.

It belongs to the complex I subunit 5 family.

It localises to the mitochondrion inner membrane. The catalysed reaction is a ubiquinone + NADH + 5 H(+)(in) = a ubiquinol + NAD(+) + 4 H(+)(out). Functionally, core subunit of the mitochondrial membrane respiratory chain NADH dehydrogenase (Complex I) that is believed to belong to the minimal assembly required for catalysis. Complex I functions in the transfer of electrons from NADH to the respiratory chain. The immediate electron acceptor for the enzyme is believed to be ubiquinone. The protein is NADH-ubiquinone oxidoreductase chain 5 (ND5) of Pisaster ochraceus (Ochre sea star).